A 360-amino-acid polypeptide reads, in one-letter code: GTPase Obg (360 aa).

The Obg domain occupies 1–156 (MFVDSVEIII…KCVRLELKLI (156 aa)). Residues 157–360 (ADIGLVGFPN…LKFVLLKALQ (204 aa)) form the OBG-type G domain. Residues 163–170 (GFPNAGKS), 188–192 (FTTLV), 210–213 (DIPG), 279–282 (NKCD), and 341–343 (SAV) each bind GTP. Mg(2+) contacts are provided by Ser-170 and Thr-190.

It belongs to the TRAFAC class OBG-HflX-like GTPase superfamily. OBG GTPase family. In terms of assembly, monomer. Mg(2+) is required as a cofactor.

The protein resides in the cytoplasm. Its function is as follows. An essential GTPase which binds GTP, GDP and possibly (p)ppGpp with moderate affinity, with high nucleotide exchange rates and a fairly low GTP hydrolysis rate. Plays a role in control of the cell cycle, stress response, ribosome biogenesis and in those bacteria that undergo differentiation, in morphogenesis control. This chain is GTPase Obg, found in Helicobacter pylori (strain J99 / ATCC 700824) (Campylobacter pylori J99).